A 353-amino-acid polypeptide reads, in one-letter code: Thiamine thiazole synthase 1, chloroplastic (353 aa).

Residues 1–48 (MATLTSSICSKPKASVFDPHKSSFHGVPIATQARLSPVKSTPVNLAVT) constitute a chloroplast transit peptide. Substrate-binding positions include Ala97, 117 to 118 (EQ), Gly125, and Ala190. Cys219 bears the 2,3-didehydroalanine (Cys) mark. Substrate is bound by residues Asp221, His236, Met288, and 298 to 300 (RMG).

The protein belongs to the THI4 family. As to quaternary structure, homooctamer. It depends on Fe cation as a cofactor. Post-translationally, during the catalytic reaction, a sulfide is transferred from Cys-219 to a reaction intermediate, generating a dehydroalanine residue.

The protein localises to the plastid. Its subcellular location is the chloroplast. It catalyses the reaction [ADP-thiazole synthase]-L-cysteine + glycine + NAD(+) = [ADP-thiazole synthase]-dehydroalanine + ADP-5-ethyl-4-methylthiazole-2-carboxylate + nicotinamide + 3 H2O + 2 H(+). In terms of biological role, involved in biosynthesis of the thiamine precursor thiazole. Catalyzes the conversion of NAD and glycine to adenosine diphosphate 5-(2-hydroxyethyl)-4-methylthiazole-2-carboxylic acid (ADT), an adenylated thiazole intermediate. The reaction includes an iron-dependent sulfide transfer from a conserved cysteine residue of the protein to a thiazole intermediate. The enzyme can only undergo a single turnover, which suggests it is a suicide enzyme. May have additional roles in adaptation to various stress conditions and in DNA damage tolerance. This chain is Thiamine thiazole synthase 1, chloroplastic, found in Vitis vinifera (Grape).